The chain runs to 371 residues: Aminomethyltransferase (371 aa).

The protein belongs to the GcvT family. In terms of assembly, the glycine cleavage system is composed of four proteins: P, T, L and H.

The catalysed reaction is N(6)-[(R)-S(8)-aminomethyldihydrolipoyl]-L-lysyl-[protein] + (6S)-5,6,7,8-tetrahydrofolate = N(6)-[(R)-dihydrolipoyl]-L-lysyl-[protein] + (6R)-5,10-methylene-5,6,7,8-tetrahydrofolate + NH4(+). Its function is as follows. The glycine cleavage system catalyzes the degradation of glycine. The sequence is that of Aminomethyltransferase from Nitrosococcus oceani (strain ATCC 19707 / BCRC 17464 / JCM 30415 / NCIMB 11848 / C-107).